The following is a 224-amino-acid chain: Putative O-methyltransferase MMAR_4217 (224 aa).

Residues 1–11 (MHGTDSSSDTP) show a composition bias toward polar residues. Residues 1–20 (MHGTDSSSDTPGQPAPSRAE) form a disordered region. Residues valine 51, glutamate 73, 75 to 76 (GT), serine 81, aspartate 99, and isoleucine 100 each bind S-adenosyl-L-methionine. Aspartate 147 contacts substrate. Aspartate 149 provides a ligand contact to S-adenosyl-L-methionine.

The protein belongs to the class I-like SAM-binding methyltransferase superfamily. Cation-dependent O-methyltransferase family.

This Mycobacterium marinum (strain ATCC BAA-535 / M) protein is Putative O-methyltransferase MMAR_4217.